Consider the following 595-residue polypeptide: Tyrosine-protein phosphatase cdcA (595 aa).

The tract at residues 32 to 57 is disordered; sequence TPFPYPAEQPKSPSKRRAQASPSKKR. Over residues 44–57 the composition is skewed to basic residues; it reads PSKRRAQASPSKKR. Residues 233–381 form the Tyrosine-protein phosphatase domain; the sequence is LPSTVSEVRS…QGSFREWWFE (149 aa). Catalysis depends on cysteine 322, which acts as the Phosphocysteine intermediate. The tract at residues 392–595 is disordered; the sequence is QPNPVTPGRS…GSPVRVKAQA (204 aa). Residues 449–461 show a composition bias toward basic residues; it reads RKSHRKDSRHHPY. Residues 471–483 are compositionally biased toward basic and acidic residues; it reads VDKDTRKTRRSTD. A compositionally biased stretch (polar residues) spans 502 to 526; it reads SKSPAASPGQRSISYSATVTASYTL.

The protein belongs to the protein-tyrosine phosphatase family. Non-receptor class CDC14 subfamily.

It localises to the nucleus. The protein resides in the cytoplasm. It is found in the cell septum. It catalyses the reaction O-phospho-L-tyrosyl-[protein] + H2O = L-tyrosyl-[protein] + phosphate. Its function is as follows. Protein phosphatase which antagonizes mitotic cyclin-dependent kinase nimX, the inactivation of which is essential for exit from mitosis. To access its substrates, is released from nucleolar sequestration during mitosis. Plays an essential in coordinating the nuclear division cycle with cytokinesis through the cytokinesis checkpoint. Involved in chromosome segregation, where it is required for meiosis I spindle dissambly as well as for establishing two consecutive chromosome segregation phases. Required for the transcription of the two major endoglucanase genes eglA and eglB and growth on synthetic cellulose as the sole carbon source. This is Tyrosine-protein phosphatase cdcA (cdcA) from Emericella nidulans (strain FGSC A4 / ATCC 38163 / CBS 112.46 / NRRL 194 / M139) (Aspergillus nidulans).